The following is a 334-amino-acid chain: Atypical chemokine receptor 1 (334 aa).

Residues 1 to 61 (MGNCLYPVET…CNLLDRSSLP (61 aa)) lie on the Extracellular side of the membrane. 3 N-linked (GlcNAc...) asparagine glycosylation sites follow: Asn-16, Asn-26, and Asn-32. 2 disulfides stabilise this stretch: Cys-49–Cys-274 and Cys-127–Cys-193. Residues 62–82 (FFMLTSVLGMLASGSILFAIL) traverse the membrane as a helical segment. Topologically, residues 83–93 (RPFFHWQICPS) are cytoplasmic. Residues 94–114 (WPILAELAVGSALFSIAVPIL) traverse the membrane as a helical segment. Residues 115-127 (APGLHSAHSTALC) lie on the Extracellular side of the membrane. A helical membrane pass occupies residues 128–151 (NLGYWVWYTSAFAQALLIGCYACL). The Cytoplasmic segment spans residues 152 to 164 (NPRLNIGQLRGFT). The chain crosses the membrane as a helical span at residues 165 to 185 (LGLSVGLWGAAALSGLPVALA). At 186–205 (SDVYNGFCTFPSSRDMEALK) the chain is on the extracellular side. The helical transmembrane segment at 206–226 (YTHYAICFTIFTVLPLTLLAA) threads the bilayer. Residues 227 to 242 (KGLKIALSKGPGPWVS) lie on the Cytoplasmic side of the membrane. The helical transmembrane segment at 243-263 (VLWIWFIFWWPHGMVLIFDAL) threads the bilayer. Topologically, residues 264–285 (VRSKTVLLYTCQSQKILDAMLN) are extracellular. Asn-285 carries an N-linked (GlcNAc...) asparagine glycan. Residues 286-306 (VTEALSMLHCVATPLLLALFC) traverse the membrane as a helical segment. The Cytoplasmic segment spans residues 307–334 (HQTTRRSLSSLSLPTRQASQMDALAGKS).

The protein belongs to the G-protein coupled receptor 1 family. Atypical chemokine receptor subfamily. As to expression, expressed in liver and brain.

It localises to the early endosome. It is found in the recycling endosome. The protein resides in the membrane. Its function is as follows. Atypical chemokine receptor that controls chemokine levels and localization via high-affinity chemokine binding that is uncoupled from classic ligand-driven signal transduction cascades, resulting instead in chemokine sequestration, degradation, or transcytosis. Also known as interceptor (internalizing receptor) or chemokine-scavenging receptor or chemokine decoy receptor. Has a promiscuous chemokine-binding profile, interacting with inflammatory chemokines of both the CXC and the CC subfamilies but not with homeostatic chemokines. Acts as a receptor for chemokines including CCL2, CCL5, CCL7, CCL11, CCL13, CCL14, CCL17, CXCL5, CXCL6, IL8/CXCL8, CXCL11, GRO, RANTES, MCP-1 and TARC. May regulate chemokine bioavailability and, consequently, leukocyte recruitment through two distinct mechanisms: when expressed in endothelial cells, it sustains the abluminal to luminal transcytosis of tissue-derived chemokines and their subsequent presentation to circulating leukocytes; when expressed in erythrocytes, serves as blood reservoir of cognate chemokines but also as a chemokine sink, buffering potential surges in plasma chemokine levels. (Microbial infection) Acts as a receptor for the malaria parasite Plasmodium yoelii in mature erythrocytes but not reticulocytes. The protein is Atypical chemokine receptor 1 (Ackr1) of Mus musculus (Mouse).